Here is a 151-residue protein sequence, read N- to C-terminus: UPF0178 protein Shal_3046 (151 aa).

This sequence belongs to the UPF0178 family.

The chain is UPF0178 protein Shal_3046 from Shewanella halifaxensis (strain HAW-EB4).